We begin with the raw amino-acid sequence, 545 residues long: Chaperonin GroEL (545 aa).

Residues 30 to 33 (TMGP), lysine 51, 87 to 91 (DGTTT), glycine 416, 479 to 481 (NAA), and aspartate 495 each bind ATP.

Belongs to the chaperonin (HSP60) family. In terms of assembly, forms a cylinder of 14 subunits composed of two heptameric rings stacked back-to-back. Interacts with the co-chaperonin GroES.

The protein localises to the cytoplasm. The enzyme catalyses ATP + H2O + a folded polypeptide = ADP + phosphate + an unfolded polypeptide.. Its function is as follows. Together with its co-chaperonin GroES, plays an essential role in assisting protein folding. The GroEL-GroES system forms a nano-cage that allows encapsulation of the non-native substrate proteins and provides a physical environment optimized to promote and accelerate protein folding. The sequence is that of Chaperonin GroEL from Nautilia profundicola (strain ATCC BAA-1463 / DSM 18972 / AmH).